We begin with the raw amino-acid sequence, 442 residues long: PTS system oligo-beta-mannoside-specific EIIC component (442 aa).

The PTS EIIC type-3 domain occupies isoleucine 5–phenylalanine 411. 11 helical membrane passes run alanine 28–leucine 48, phenylalanine 67–glycine 87, glutamate 97–isoleucine 117, glycine 138–valine 157, phenylalanine 177–valine 197, methionine 205–isoleucine 225, leucine 228–isoleucine 248, threonine 286–methionine 306, proline 329–alanine 349, leucine 365–isoleucine 385, and isoleucine 391–phenylalanine 411.

The protein localises to the cell membrane. Functionally, the phosphoenolpyruvate-dependent sugar phosphotransferase system (sugar PTS), a major carbohydrate active transport system, catalyzes the phosphorylation of incoming sugar substrates concomitantly with their translocation across the cell membrane. The enzyme II GmuABC PTS system is involved in the transport of oligo-glucomannans such as cellobiose or mannobiose. This Bacillus subtilis (strain 168) protein is PTS system oligo-beta-mannoside-specific EIIC component.